A 1032-amino-acid chain; its full sequence is GPI ethanolamine phosphate transferase 1 (1032 aa).

The Cytoplasmic portion of the chain corresponds to 1–6 (MARLGR). Residues 7–27 (FGFLALAVVFHLIYAYSIFDI) form a helical membrane-spanning segment. Residues 28-468 (YFVSPIVSGM…LQTYDWLFLR (441 aa)) are Lumenal-facing. N-linked (GlcNAc...) asparagine glycans are attached at residues N150 and N435. Residues 469 to 489 (TIITFGYLGWIAYALTTVIDL) form a helical membrane-spanning segment. Residues 490–500 (HVLHRTSDSKR) lie on the Cytoplasmic side of the membrane. A helical transmembrane segment spans residues 501-521 (TVGSTIFFTSILAALFSVLLY). At 522-523 (QK) the chain is on the lumenal side. A helical transmembrane segment spans residues 524 to 544 (SSWQYYVYGAFPIFFWEEVFA). The Cytoplasmic portion of the chain corresponds to 545 to 564 (RRKALIAGREILLGHVRSFG). A helical transmembrane segment spans residues 565-585 (GYIASGFQLVAFVAVLEALLM). Residues 586–596 (RHQVQSYFHRE) are Lumenal-facing. A helical membrane pass occupies residues 597–617 (IYTVCFVLGSFWPILYGVDFV). At 618–622 (RQNTV) the chain is on the cytoplasmic side. The helical transmembrane segment at 623-643 (LSATWAVGCSLMSTFTLLPVI) threads the bilayer. The Lumenal segment spans residues 644-647 (KVEN). A helical membrane pass occupies residues 648 to 668 (INTITYGALLMFFTGLFYLLF). The Cytoplasmic portion of the chain corresponds to 669-688 (EDTILKHSKSSGHAPGAISS). Residues 689–709 (LGSRVIMGMQVGMVLLALIVT) form a helical membrane-spanning segment. Topologically, residues 710–722 (RSSVSSLQAKQGL) are lumenal. The helical transmembrane segment at 723 to 743 (PFGNQVVGWFVLVASLVLPFF) threads the bilayer. Over 744–766 (HRLYPNSHYLHRLMVLFLTFSPT) the chain is Cytoplasmic. A helical membrane pass occupies residues 767–787 (FIILTISYEGLFYFVFCMTLV). The Lumenal portion of the chain corresponds to 788–841 (TWVRLEHAIYVYTARSSAHYGGNNTVPKKPGLNATAVIDGQEYRYRRLGLADTR). N-linked (GlcNAc...) asparagine glycans are attached at residues N810 and N820. A helical transmembrane segment spans residues 842–862 (VALFFFFLLQSAFFSTGNIAS). Topologically, residues 863 to 884 (VSSFSLESVFRLIPVFSPFSQS) are cytoplasmic. Residues 885 to 905 (ALLILKLLIPFAIISANLGIL) traverse the membrane as a helical segment. The Lumenal segment spans residues 906–914 (NRRLEVAPS). A helical transmembrane segment spans residues 915–935 (ALFMVVMSISDVMTLNFFYMV). Over 936 to 951 (RDEGSWLDIGTTISHF) the chain is Cytoplasmic. Residues 952 to 972 (LIASFLCTFVAGLEFLSEVFI) traverse the membrane as a helical segment. The Lumenal segment spans residues 973–1032 (SGVDFGPTTKAIGASITKTVGGTAGSDVVDSQSGPEDAANSKKAEGLEGSETIRQNGGSV). The interval 994–1032 (GTAGSDVVDSQSGPEDAANSKKAEGLEGSETIRQNGGSV) is disordered.

This sequence belongs to the PIGG/PIGN/PIGO family. PIGN subfamily.

Its subcellular location is the endoplasmic reticulum membrane. Its pathway is glycolipid biosynthesis; glycosylphosphatidylinositol-anchor biosynthesis. Its function is as follows. Ethanolamine phosphate transferase involved in glycosylphosphatidylinositol-anchor biosynthesis. Transfers ethanolamine phosphate to the first alpha-1,4-linked mannose of the glycosylphosphatidylinositol precursor of GPI-anchor. This Aspergillus fumigatus (strain ATCC MYA-4609 / CBS 101355 / FGSC A1100 / Af293) (Neosartorya fumigata) protein is GPI ethanolamine phosphate transferase 1 (mcd4).